Here is a 206-residue protein sequence, read N- to C-terminus: Large ribosomal subunit protein mL62 (206 aa).

The N-terminal 29 residues, 1-29, are a transit peptide targeting the mitochondrion; sequence MATAWGLRWGLSRTGTLLLAPPARCARRA. N5-methylglutamine is present on Gln90.

Belongs to the prokaryotic/mitochondrial release factor family. Mitochondrion-specific ribosomal protein mL62 subfamily. In terms of assembly, component of the mitochondrial ribosome large subunit (39S) which comprises a 16S rRNA and about 50 distinct proteins. Post-translationally, methylation of glutamine in the GGQ triplet by HEMK1.

The protein localises to the mitochondrion. The enzyme catalyses an N-acyl-L-alpha-aminoacyl-tRNA + H2O = an N-acyl-L-amino acid + a tRNA + H(+). In terms of biological role, essential peptidyl-tRNA hydrolase component of the mitochondrial large ribosomal subunit. Acts as a codon-independent translation release factor that has lost all stop codon specificity and directs the termination of translation in mitochondrion, possibly in case of abortive elongation. May be involved in the hydrolysis of peptidyl-tRNAs that have been prematurely terminated and thus in the recycling of stalled mitochondrial ribosomes. This is Large ribosomal subunit protein mL62 from Mus musculus (Mouse).